Reading from the N-terminus, the 221-residue chain is UPF0319 protein NTHI1987 (221 aa).

The first 21 residues, 1–21, serve as a signal peptide directing secretion; it reads MKLRAVVLGLATLCTSTATFA.

This sequence belongs to the UPF0319 family.

The protein is UPF0319 protein NTHI1987 of Haemophilus influenzae (strain 86-028NP).